Consider the following 1220-residue polypeptide: DNA polymerase catalytic subunit (1220 aa).

Disordered stretches follow at residues Gly21–Gln43 and Gln641–Val691. The span at Ser646 to Phe660 shows a compositional bias: polar residues.

It belongs to the DNA polymerase type-B family. In terms of assembly, forms a complex with the ssDNA-binding protein, the DNA polymerase processivity factor, and the alkaline exonuclease. Interacts with the helicase-primase complex composed of the primase, the helicase and the primase-associated factor; this interaction may coordinate leading and lagging strand DNA synthesis at the replication fork.

Its subcellular location is the host nucleus. The enzyme catalyses DNA(n) + a 2'-deoxyribonucleoside 5'-triphosphate = DNA(n+1) + diphosphate. It carries out the reaction Endonucleolytic cleavage to 5'-phosphomonoester.. Functionally, replicates viral genomic DNA. The replication complex is composed of six viral proteins: the DNA polymerase, processivity factor, primase, primase-associated factor, helicase, and ssDNA-binding protein. Additionally, the polymerase contains an intrinsic ribonuclease H (RNase H) activity that specifically degrades RNA/DNA heteroduplexes or duplex DNA substrates in the 5' to 3' direction. Therefore, it can catalyze the excision of the RNA primers that initiate the synthesis of Okazaki fragments at a replication fork during viral DNA replication. The sequence is that of DNA polymerase catalytic subunit from Equus caballus (Horse).